We begin with the raw amino-acid sequence, 436 residues long: UPF0597 protein YhaM (436 aa).

The protein belongs to the UPF0597 family.

The chain is UPF0597 protein YhaM from Escherichia coli O7:K1 (strain IAI39 / ExPEC).